The chain runs to 95 residues: Large ribosomal subunit protein uL23 (95 aa).

This sequence belongs to the universal ribosomal protein uL23 family. Part of the 50S ribosomal subunit. Contacts protein L29, and trigger factor when it is bound to the ribosome.

One of the early assembly proteins it binds 23S rRNA. One of the proteins that surrounds the polypeptide exit tunnel on the outside of the ribosome. Forms the main docking site for trigger factor binding to the ribosome. The chain is Large ribosomal subunit protein uL23 from Heliobacterium modesticaldum (strain ATCC 51547 / Ice1).